A 295-amino-acid polypeptide reads, in one-letter code: Small ribosomal subunit protein uS2 (295 aa).

The segment at 247 to 295 is disordered; the sequence is TDKGLTSKNVSKLKQTKKFSKTKNIDEETNTEFEQALNDADENKNSDNA.

Belongs to the universal ribosomal protein uS2 family.

In Rickettsia conorii (strain ATCC VR-613 / Malish 7), this protein is Small ribosomal subunit protein uS2.